Reading from the N-terminus, the 132-residue chain is Glycine cleavage system H protein (132 aa).

The Lipoyl-binding domain maps to 24-106; the sequence is TVRVGLTDFA…YGAGWLLDVH (83 aa). At Lys-65 the chain carries N6-lipoyllysine.

This sequence belongs to the GcvH family. In terms of assembly, the glycine cleavage system is composed of four proteins: P, T, L and H. It depends on (R)-lipoate as a cofactor.

In terms of biological role, the glycine cleavage system catalyzes the degradation of glycine. The H protein shuttles the methylamine group of glycine from the P protein to the T protein. The chain is Glycine cleavage system H protein from Mycobacterium leprae (strain Br4923).